Consider the following 555-residue polypeptide: Cytochrome P450 monooxygeanse terQ (555 aa).

Residues 10-30 form a helical membrane-spanning segment; sequence VPAHAWPTITVAGAVMVVVLL. Cys479 serves as a coordination point for heme. Positions 535-555 are disordered; that stretch reads DAGNTARVDPGAPDGVASEPS.

The protein belongs to the cytochrome P450 family. It depends on heme as a cofactor.

The protein localises to the membrane. The protein operates within secondary metabolite biosynthesis. Its function is as follows. Cytochrome P450 monooxygeanse; part of the gene cluster that mediates the biosynthesis of terpendoles, indole-diterpene (IDT) mycotoxins including terpendole I, terpendole K, terpendole C, as well as the kinesin Eg5 inhibitor terpendole E. TerQ is a C11-hydroxylating enzyme that converts paspalline into terpendole E. Is also able to hydroxylate 13-desoxyterpendole I at C-13 to produce terpendole I. Terpendoles biosynthesis begins with the synthesis of geranylgeranyl diphosphate (GGPP) by a yet unidentified GGPP synthase. Condensation of indole-3-glycerol phosphate with GGPP by the prenyltransferase terC then forms 3-geranylgeranylindole (3-GGI), followed by epoxidation and cyclization of this intermediate (by the FAD-dependent monooxygeanse terM and the terpene cyclase terB) to form paspaline. The cytochrome monooxygenase terQ then hydroxylates paspalline at C-11 to yield terpendole E. The cytochrome monooxygenase terP converts terpendole E to 13-desoxyterpendole I, and terQ converts 13-desoxyterpendole I into terpendole I. TerF and terK are required for conversion of terpendole I to terpendole C which is further converted to terpendole K. The chain is Cytochrome P450 monooxygeanse terQ from Tolypocladium album (Soil fungus).